The primary structure comprises 85 residues: Glutaredoxin (85 aa).

The 85-residue stretch at 1–85 folds into the Glutaredoxin domain; that stretch reads MQTVTMYTGP…EGGLDGLLNP (85 aa). The cysteines at positions 12 and 15 are disulfide-linked.

It belongs to the glutaredoxin family. As to quaternary structure, monomer.

It is found in the cytoplasm. Functionally, has a glutathione-disulfide oxidoreductase activity in the presence of NADPH and glutathione reductase. Reduces low molecular weight disulfides and proteins. The sequence is that of Glutaredoxin (grx) from Neisseria meningitidis serogroup A / serotype 4A (strain DSM 15465 / Z2491).